Here is a 705-residue protein sequence, read N- to C-terminus: Elongation factor G (705 aa).

One can recognise a tr-type G domain in the interval 8 to 290 (AYYRNIGISA…AVIEYLPAPT (283 aa)). Residues 17–24 (AHIDAGKT), 88–92 (DTPGH), and 142–145 (NKMD) each bind GTP.

This sequence belongs to the TRAFAC class translation factor GTPase superfamily. Classic translation factor GTPase family. EF-G/EF-2 subfamily.

Its subcellular location is the cytoplasm. Its function is as follows. Catalyzes the GTP-dependent ribosomal translocation step during translation elongation. During this step, the ribosome changes from the pre-translocational (PRE) to the post-translocational (POST) state as the newly formed A-site-bound peptidyl-tRNA and P-site-bound deacylated tRNA move to the P and E sites, respectively. Catalyzes the coordinated movement of the two tRNA molecules, the mRNA and conformational changes in the ribosome. The sequence is that of Elongation factor G from Baumannia cicadellinicola subsp. Homalodisca coagulata.